We begin with the raw amino-acid sequence, 303 residues long: Ribonuclease Z (303 aa).

Residues His-61, His-63, Asp-65, His-66, His-139, Asp-207, and His-266 each contribute to the Zn(2+) site. The active-site Proton acceptor is Asp-65.

It belongs to the RNase Z family. As to quaternary structure, homodimer. It depends on Zn(2+) as a cofactor.

The catalysed reaction is Endonucleolytic cleavage of RNA, removing extra 3' nucleotides from tRNA precursor, generating 3' termini of tRNAs. A 3'-hydroxy group is left at the tRNA terminus and a 5'-phosphoryl group is left at the trailer molecule.. Zinc phosphodiesterase, which displays some tRNA 3'-processing endonuclease activity. Probably involved in tRNA maturation, by removing a 3'-trailer from precursor tRNA. The polypeptide is Ribonuclease Z (Clostridium kluyveri (strain ATCC 8527 / DSM 555 / NBRC 12016 / NCIMB 10680 / K1)).